A 36-amino-acid polypeptide reads, in one-letter code: Collagen alpha-2(I) chain (36 aa).

A disordered region spans residues 1–36; the sequence is GSNGEPGSAGPPGPAGLRGLPGESGAVGPAGPPGSR. 2 positions are modified to 4-hydroxyproline: Pro-6 and Pro-12. Positions 15–29 are enriched in low complexity; it reads AGLRGLPGESGAVGP. 4-hydroxyproline is present on Pro-33.

It belongs to the fibrillar collagen family. In terms of assembly, trimers of one alpha 2(I) and two alpha 1(I) chains. In terms of processing, proline residues at the third position of the tripeptide repeating unit (G-X-Y) are hydroxylated in some or all of the chains.

The protein localises to the secreted. The protein resides in the extracellular space. It is found in the extracellular matrix. In terms of biological role, type I collagen is a member of group I collagen (fibrillar forming collagen). In Brachylophosaurus canadensis (Campanian hadrosaur), this protein is Collagen alpha-2(I) chain.